The chain runs to 880 residues: Valine--tRNA ligase (880 aa).

A 'HIGH' region motif is present at residues 51-61; it reads PNVTGELHLGH. Residues 529–533 carry the 'KMSKS' region motif; that stretch reads KMSKT. K532 is a binding site for ATP. A coiled-coil region spans residues 815-854; sequence MSTMVDLEVEAKRVKAEISELEIQIERLSTRLSDEQFLAK.

The protein belongs to the class-I aminoacyl-tRNA synthetase family. ValS type 1 subfamily. As to quaternary structure, monomer.

It is found in the cytoplasm. The catalysed reaction is tRNA(Val) + L-valine + ATP = L-valyl-tRNA(Val) + AMP + diphosphate. Catalyzes the attachment of valine to tRNA(Val). As ValRS can inadvertently accommodate and process structurally similar amino acids such as threonine, to avoid such errors, it has a 'posttransfer' editing activity that hydrolyzes mischarged Thr-tRNA(Val) in a tRNA-dependent manner. The sequence is that of Valine--tRNA ligase from Dehalococcoides mccartyi (strain CBDB1).